A 438-amino-acid polypeptide reads, in one-letter code: Serine hydroxymethyltransferase (438 aa).

(6S)-5,6,7,8-tetrahydrofolate-binding positions include L119 and 123 to 125; that span reads GHL. K228 is modified (N6-(pyridoxal phosphate)lysine). 370-372 is a binding site for (6S)-5,6,7,8-tetrahydrofolate; that stretch reads SPF.

It belongs to the SHMT family. In terms of assembly, homodimer. Pyridoxal 5'-phosphate serves as cofactor.

It is found in the cytoplasm. The enzyme catalyses (6R)-5,10-methylene-5,6,7,8-tetrahydrofolate + glycine + H2O = (6S)-5,6,7,8-tetrahydrofolate + L-serine. The protein operates within one-carbon metabolism; tetrahydrofolate interconversion. Its pathway is amino-acid biosynthesis; glycine biosynthesis; glycine from L-serine: step 1/1. Catalyzes the reversible interconversion of serine and glycine with tetrahydrofolate (THF) serving as the one-carbon carrier. This reaction serves as the major source of one-carbon groups required for the biosynthesis of purines, thymidylate, methionine, and other important biomolecules. Also exhibits THF-independent aldolase activity toward beta-hydroxyamino acids, producing glycine and aldehydes, via a retro-aldol mechanism. The protein is Serine hydroxymethyltransferase of Pelodictyon phaeoclathratiforme (strain DSM 5477 / BU-1).